The chain runs to 616 residues: MPKYRSATTTHGRNMAGARALWRATGMTDSDFGKPIIAVVNSFTQFVPGHVHLRDLGKLVAEQIEASGGVAKEFNTIAVDDGIAMGHGGMLYSLPSRELIADSVEYMVNAHCADAMVCISNCDKITPGMLMASLRLNIPVIFVSGGPMEAGKTKLSDQIIKLDLVDAMIQGADPKVSDDQSNQVERSACPTCGSCSGMFTANSMNCLTEALGLSQPGNGSLLATHADRKQLFLNAGKRIVELTKRYYEQDDESALPRNIASKAAFENAMTLDIAMGGSTNTVLHLLAAAQEAEIDFTMSDIDKLSRKVPQLCKVAPSTQKYHMEDVHRAGGVLGILGELDRAGLLNRNVKNVLGLTLPQTLEQYDITVTQDEAVKKMFRAGPAGIRTTQAFSQDCRWDSLDDDRAAGCIRSLEYAYSKDGGLAVLYGNFAENGCIVKTAGVDDSILKFTGPAKVYESQDDAVEAILGGKVVEGDVVVIRYEGPKGGPGMQEMLYPTSFLKSMGLGKACALITDGRFSGGTSGLSIGHVSPEAASGGTIALIEDGDTIAIDIPNRSIQLQLNEAEIAARREAQEARGDKAWTPKNRQRQVSFALRAYASLATSADKGAVRDKSKLGG.

Aspartate 81 serves as a coordination point for Mg(2+). Cysteine 122 serves as a coordination point for [2Fe-2S] cluster. Positions 123 and 124 each coordinate Mg(2+). Lysine 124 bears the N6-carboxylysine mark. [2Fe-2S] cluster is bound at residue cysteine 195. Glutamate 491 serves as a coordination point for Mg(2+). The active-site Proton acceptor is serine 517.

The protein belongs to the IlvD/Edd family. As to quaternary structure, homodimer. Requires [2Fe-2S] cluster as cofactor. Mg(2+) is required as a cofactor.

The catalysed reaction is (2R)-2,3-dihydroxy-3-methylbutanoate = 3-methyl-2-oxobutanoate + H2O. The enzyme catalyses (2R,3R)-2,3-dihydroxy-3-methylpentanoate = (S)-3-methyl-2-oxopentanoate + H2O. It participates in amino-acid biosynthesis; L-isoleucine biosynthesis; L-isoleucine from 2-oxobutanoate: step 3/4. Its pathway is amino-acid biosynthesis; L-valine biosynthesis; L-valine from pyruvate: step 3/4. Its function is as follows. Functions in the biosynthesis of branched-chain amino acids. Catalyzes the dehydration of (2R,3R)-2,3-dihydroxy-3-methylpentanoate (2,3-dihydroxy-3-methylvalerate) into 2-oxo-3-methylpentanoate (2-oxo-3-methylvalerate) and of (2R)-2,3-dihydroxy-3-methylbutanoate (2,3-dihydroxyisovalerate) into 2-oxo-3-methylbutanoate (2-oxoisovalerate), the penultimate precursor to L-isoleucine and L-valine, respectively. The chain is Dihydroxy-acid dehydratase from Salmonella schwarzengrund (strain CVM19633).